We begin with the raw amino-acid sequence, 159 residues long: Succinate dehydrogenase [ubiquinone] cytochrome b small subunit, mitochondrial (159 aa).

A mitochondrion-targeting transit peptide spans 1–30 (MLQTRLGLGALRQGRLLFAVKSFSTTSVAK). At 31 to 65 (IFPPPPQTIKGTVNDAAVFPHHSKLHGSYHWDFER) the chain is on the mitochondrial matrix side. Residues 66 to 82 (IIAIAMVPQVMIPLFTG) traverse the membrane as a helical segment. Over 83–89 (TSHPLMD) the chain is Mitochondrial intermembrane. Residues 90-109 (AALACTLITHAHLGFESCVI) traverse the membrane as a helical segment. His-99 is a heme binding site. Residues 110–122 (DYFPARRFKKLSP) are Mitochondrial matrix-facing. Tyr-111 lines the a ubiquinone pocket. The helical transmembrane segment at 123–140 (LMHWILRGCTVLTLIGVY) threads the bilayer. Residues 141–159 (EFNTNDIGLTEGIKKLWKS) are Mitochondrial intermembrane-facing.

This sequence belongs to the CybS family. Forms part of complex II containing four subunits: a flavoprotein (FP), an iron-sulfur protein (IP) and a cytochrome b composed of a large and a small subunit.

The protein localises to the mitochondrion inner membrane. Its pathway is carbohydrate metabolism; tricarboxylic acid cycle. Its function is as follows. Membrane-anchoring subunit of succinate dehydrogenase (SDH) that is involved in complex II of the mitochondrial electron transport chain and is responsible for transferring electrons from succinate to ubiquinone (coenzyme Q). The protein is Succinate dehydrogenase [ubiquinone] cytochrome b small subunit, mitochondrial (sdh4) of Schizosaccharomyces pombe (strain 972 / ATCC 24843) (Fission yeast).